A 285-amino-acid chain; its full sequence is D-apionate oxidoisomerase (285 aa).

Residues 15–17, Glu36, and Asp71 contribute to the NAD(+) site; that span reads GKM. 2 residues coordinate Zn(2+): His116 and Glu186.

It belongs to the ApnO family. Zn(2+) is required as a cofactor.

It catalyses the reaction D-apionate + NAD(+) = 3-oxoisoapionate + NADH + H(+). It participates in carbohydrate metabolism. In terms of biological role, involved in catabolism of D-apiose. Catalyzes the conversion of D-apionate to 3-oxo-isoapionate. In Pectobacterium atrosepticum (strain SCRI 1043 / ATCC BAA-672) (Erwinia carotovora subsp. atroseptica), this protein is D-apionate oxidoisomerase.